Consider the following 458-residue polypeptide: Zinc finger protein 19 (458 aa).

One can recognise a KRAB domain in the interval 14-85 (VTFEDVAVHF…EAQDDPPAER (72 aa)). C2H2-type zinc fingers lie at residues 161 to 183 (FICEECGKSFSYFSYYARHQRIH), 189 to 211 (FECSECGKAFNGNSSLIRHQRIH), 217 to 239 (YQCEECGRAFNDNANLIRHQRIH), 245 to 267 (YYCTECGNSFTSSSEFVIHQRIH), 273 to 295 (YECNECGKAFVGNSPLLRHQKIH), 301 to 323 (YECNECGKSFGRTSHLSQHQRIH), 329 to 351 (YSCKVCGQAFNFHTKLTRHQRIH), 357 to 379 (FDCVDCGKAFSAQEQLKRHLRIH), and 385 to 407 (YVCDECGKALTSKRNLHQHQRIH). The segment at 413–433 (YECSKYEKAFGTSSQLGHLEH) adopts a C2H2-type 10; atypical zinc-finger fold.

It belongs to the krueppel C2H2-type zinc-finger protein family.

The protein resides in the nucleus. In terms of biological role, may be involved in transcriptional regulation. This is Zinc finger protein 19 (ZNF19) from Homo sapiens (Human).